The chain runs to 60 residues: Large ribosomal subunit protein uL30 (60 aa).

The protein belongs to the universal ribosomal protein uL30 family. Part of the 50S ribosomal subunit.

The chain is Large ribosomal subunit protein uL30 from Shewanella baltica (strain OS223).